We begin with the raw amino-acid sequence, 315 residues long: Probable HTH-type transcriptional regulator SinR (315 aa).

One can recognise an HTH lysR-type domain in the interval 8 to 65; the sequence is RGMRDWMIFIKVAEVGNLSRAARELDISISAVSKSLSRLENSIEVTLLRRDSHHLELT. Residues 25-44 constitute a DNA-binding region (H-T-H motif); it reads LSRAARELDISISAVSKSLS.

Belongs to the LysR transcriptional regulatory family.

Its function is as follows. Probable regulatory protein. Its target is not known. This Salmonella typhimurium (strain LT2 / SGSC1412 / ATCC 700720) protein is Probable HTH-type transcriptional regulator SinR (sinR).